A 489-amino-acid polypeptide reads, in one-letter code: 5'-AMP-activated protein kinase subunit gamma-3 (489 aa).

The tract at residues 1–113 (MEPGLEHALR…PAGVGTPPTG (113 aa)) is disordered. Over residues 34-46 (SSSWPSPAVTSSS) the composition is skewed to low complexity. The span at 50 to 62 (RGKRRAKALRWTR) shows a compositional bias: basic residues. CBS domains lie at 197–258 (MATS…RSPL), 280–340 (CFKP…LLPR), and 355–415 (TFRD…HLDM). Residues Arg-225, 240–245 (MLTITD), Val-285, 306–307 (HR), and Lys-325 contribute to the ADP site. AMP-binding positions include Arg-225, 240-245 (MLTITD), Val-285, His-306, 306-307 (HR), Lys-325, Thr-355, Ala-360, 381-382 (SA), 397-400 (SRFD), Arg-424, Leu-432, His-453, 453-454 (HR), and 469-472 (SLSD). Residues Arg-225, 240-245 (MLTITD), Val-285, 306-307 (HR), Arg-307, and Lys-325 each bind ATP. Positions 293 to 314 (LFEAVYTLIKNRIHRLPVLDPV) match the AMPK pseudosubstrate motif. ADP contacts are provided by residues 397–400 (SRFD), Arg-424, Leu-432, and 453–454 (HR). ATP-binding positions include 397–400 (SRFD), Arg-424, Leu-432, and 453–454 (HR). The CBS 4 domain maps to 427–486 (CLEGVLSCQPHESLGEVIDRIAREQVHRLVLVDETQHLLGVVSLSDILQALVLSPAGIDA).

It belongs to the 5'-AMP-activated protein kinase gamma subunit family. AMPK is a heterotrimer of an alpha catalytic subunit (PRKAA1 or PRKAA2), a beta (PRKAB1 or PRKAB2) and a gamma non-catalytic subunits (PRKAG1, PRKAG2 or PRKAG3). Interacts with FNIP1 and FNIP2. In terms of processing, phosphorylated by ULK1; leading to negatively regulate AMPK activity and suggesting the existence of a regulatory feedback loop between ULK1 and AMPK. Post-translationally, glycosylated; O-GlcNAcylated by OGT, promoting the AMP-activated protein kinase (AMPK) activity. In terms of tissue distribution, skeletal muscle, with weak expression in heart and pancreas.

In terms of biological role, AMP/ATP-binding subunit of AMP-activated protein kinase (AMPK), an energy sensor protein kinase that plays a key role in regulating cellular energy metabolism. In response to reduction of intracellular ATP levels, AMPK activates energy-producing pathways and inhibits energy-consuming processes: inhibits protein, carbohydrate and lipid biosynthesis, as well as cell growth and proliferation. AMPK acts via direct phosphorylation of metabolic enzymes, and by longer-term effects via phosphorylation of transcription regulators. AMPK also acts as a regulator of cellular polarity by remodeling the actin cytoskeleton; probably by indirectly activating myosin. The AMPK gamma3 subunit is a non-catalytic subunit with a regulatory role in muscle energy metabolism. It mediates binding to AMP, ADP and ATP, leading to AMPK activation or inhibition: AMP-binding results in allosteric activation of alpha catalytic subunit (PRKAA1 or PRKAA2) both by inducing phosphorylation and preventing dephosphorylation of catalytic subunits. ADP also stimulates phosphorylation, without stimulating already phosphorylated catalytic subunit. ATP promotes dephosphorylation of catalytic subunit, rendering the AMPK enzyme inactive. This Homo sapiens (Human) protein is 5'-AMP-activated protein kinase subunit gamma-3 (PRKAG3).